A 257-amino-acid chain; its full sequence is Hydroxyacylglutathione hydrolase (257 aa).

Positions 56, 58, 60, 61, 112, 131, and 169 each coordinate Zn(2+).

This sequence belongs to the metallo-beta-lactamase superfamily. Glyoxalase II family. In terms of assembly, monomer. The cofactor is Zn(2+).

The catalysed reaction is an S-(2-hydroxyacyl)glutathione + H2O = a 2-hydroxy carboxylate + glutathione + H(+). Its pathway is secondary metabolite metabolism; methylglyoxal degradation; (R)-lactate from methylglyoxal: step 2/2. Functionally, thiolesterase that catalyzes the hydrolysis of S-D-lactoyl-glutathione to form glutathione and D-lactic acid. The sequence is that of Hydroxyacylglutathione hydrolase from Ectopseudomonas mendocina (strain ymp) (Pseudomonas mendocina).